The chain runs to 1336 residues: pre-mRNA 3' end processing protein WDR33 (1336 aa).

Ala2 is modified (N-acetylalanine). Position 7 is a phosphoserine (Ser7). Lys46 carries the post-translational modification N6-acetyllysine. WD repeat units follow at residues 117-156, 159-198, 200-239, 242-283, 286-325, 329-369, and 373-412; these read KVKC…FETI, AHDS…VKMF, AHKE…EERI, GHGA…SLAT, AHKN…EELQ, GHKK…EVGG, and AHEG…DKMR. Glycyl lysine isopeptide (Lys-Gly) (interchain with G-Cter in SUMO2) cross-links involve residues Lys526, Lys530, and Lys560. The disordered stretch occupies residues 568–1336; it reads QVEQIQPPPS…GASRGGGRGR (769 aa). A compositionally biased stretch (pro residues) spans 573–590; it reads QPPPSSGTPLLGPQPFPG. Over residues 594–607 the composition is skewed to polar residues; that stretch reads MSQIPQGFQQPHPS. The span at 608-643 shows a compositional bias: low complexity; it reads QQMPMNMAQMGPPGPQGQFRPPGPQGQMGPQGPPLH. Residues 618-770 form the Collagen-like domain; sequence GPPGPQGQFR…GPGSQGIQGP (153 aa). A compositionally biased stretch (pro residues) spans 683 to 695; it reads PHGPLGPQGPPGP. 2 stretches are compositionally biased toward low complexity: residues 696–707 and 726–751; these read QGSSGPQGHMGP and QGHL…GMQG. Position 782 is an omega-N-methylarginine (Arg782). The span at 854–869 shows a compositional bias: low complexity; sequence GPPGSQSQQGPPQGSL. Arg915 carries the post-translational modification Asymmetric dimethylarginine. Residues 932–941 are compositionally biased toward low complexity; that stretch reads PGLGQQGAQG. Composition is skewed to basic and acidic residues over residues 971 to 989 and 998 to 1034; these read SERR…ERGP and GPPD…EFEG. At Arg987 the chain carries Omega-N-methylarginine. The residue at position 1035 (Arg1035) is an Omega-N-methylarginine. Composition is skewed to basic and acidic residues over residues 1056–1068 and 1078–1122; these read PDHR…DGRG and EGRR…RGRD. Acidic residues predominate over residues 1130–1140; that stretch reads FGPEENFDASE. Positions 1141–1150 are enriched in basic and acidic residues; it reads EAARGRDLRG. Positions 1151 to 1160 are enriched in basic residues; sequence RGRGTPRGGR. Basic and acidic residues-rich tracts occupy residues 1169 to 1217 and 1242 to 1259; these read EFPR…RERS and SEHR…DRGG. Ser1210 is modified (phosphoserine). Omega-N-methylarginine is present on Arg1262. Residues 1281-1293 show a composition bias toward basic and acidic residues; sequence DGEHHDGYHRDEP. Low complexity predominate over residues 1301–1326; it reads GTPSRGGRSGSNWGRGSNMNSGPPRR. Arg1315 is subject to Asymmetric dimethylarginine; alternate. Arg1315 carries the omega-N-methylarginine; alternate modification.

This sequence belongs to the WD repeat WDR33 family. As to quaternary structure, component of the cleavage and polyadenylation specificity factor (CPSF) module of the pre-mRNA 3'-end processing complex. Interacts with CPSF3/CPSF73. In terms of tissue distribution, most highly expressed in testis.

It is found in the nucleus. Its function is as follows. Essential for both cleavage and polyadenylation of pre-mRNA 3' ends. The chain is pre-mRNA 3' end processing protein WDR33 (WDR33) from Homo sapiens (Human).